The following is a 260-amino-acid chain: 5'-nucleotidase SurE (260 aa).

The a divalent metal cation site is built by Asp8, Asp9, Ser39, and Asn91.

This sequence belongs to the SurE nucleotidase family. It depends on a divalent metal cation as a cofactor.

The protein resides in the cytoplasm. It carries out the reaction a ribonucleoside 5'-phosphate + H2O = a ribonucleoside + phosphate. Functionally, nucleotidase that shows phosphatase activity on nucleoside 5'-monophosphates. The sequence is that of 5'-nucleotidase SurE from Acidovorax ebreus (strain TPSY) (Diaphorobacter sp. (strain TPSY)).